We begin with the raw amino-acid sequence, 214 residues long: Thiamine-phosphate synthase (214 aa).

Residues 37–41 (QYREK) and Asn73 each bind 4-amino-2-methyl-5-(diphosphooxymethyl)pyrimidine. The Mg(2+) site is built by Asp74 and Asp93. Ser112 is a 4-amino-2-methyl-5-(diphosphooxymethyl)pyrimidine binding site. 139–141 (TIS) serves as a coordination point for 2-[(2R,5Z)-2-carboxy-4-methylthiazol-5(2H)-ylidene]ethyl phosphate. Lys142 is a 4-amino-2-methyl-5-(diphosphooxymethyl)pyrimidine binding site. 2-[(2R,5Z)-2-carboxy-4-methylthiazol-5(2H)-ylidene]ethyl phosphate-binding positions include Gly171 and 191–192 (IS).

The protein belongs to the thiamine-phosphate synthase family. Requires Mg(2+) as cofactor.

The enzyme catalyses 2-[(2R,5Z)-2-carboxy-4-methylthiazol-5(2H)-ylidene]ethyl phosphate + 4-amino-2-methyl-5-(diphosphooxymethyl)pyrimidine + 2 H(+) = thiamine phosphate + CO2 + diphosphate. It catalyses the reaction 2-(2-carboxy-4-methylthiazol-5-yl)ethyl phosphate + 4-amino-2-methyl-5-(diphosphooxymethyl)pyrimidine + 2 H(+) = thiamine phosphate + CO2 + diphosphate. The catalysed reaction is 4-methyl-5-(2-phosphooxyethyl)-thiazole + 4-amino-2-methyl-5-(diphosphooxymethyl)pyrimidine + H(+) = thiamine phosphate + diphosphate. It functions in the pathway cofactor biosynthesis; thiamine diphosphate biosynthesis; thiamine phosphate from 4-amino-2-methyl-5-diphosphomethylpyrimidine and 4-methyl-5-(2-phosphoethyl)-thiazole: step 1/1. Functionally, condenses 4-methyl-5-(beta-hydroxyethyl)thiazole monophosphate (THZ-P) and 2-methyl-4-amino-5-hydroxymethyl pyrimidine pyrophosphate (HMP-PP) to form thiamine monophosphate (TMP). The polypeptide is Thiamine-phosphate synthase (Listeria monocytogenes serotype 4a (strain HCC23)).